Reading from the N-terminus, the 94-residue chain is Large ribosomal subunit protein bL25 (94 aa).

The protein belongs to the bacterial ribosomal protein bL25 family. As to quaternary structure, part of the 50S ribosomal subunit; part of the 5S rRNA/L5/L18/L25 subcomplex. Contacts the 5S rRNA. Binds to the 5S rRNA independently of L5 and L18.

This is one of the proteins that binds to the 5S RNA in the ribosome where it forms part of the central protuberance. This chain is Large ribosomal subunit protein bL25, found in Pectobacterium carotovorum subsp. carotovorum (strain PC1).